Reading from the N-terminus, the 926-residue chain is Serine/threonine-protein kinase SIK2 (926 aa).

Residues 20-271 (YDIEGTLGKG…IAQIKEHKWM (252 aa)) form the Protein kinase domain. Position 25 is a phosphothreonine (Thr-25). ATP is bound by residues 26–34 (LGKGNFAVV) and Lys-49. Position 53 is an N6-acetyllysine; by EP300 (Lys-53). Asp-142 acts as the Proton acceptor in catalysis. Thr-175 carries the phosphothreonine; by LKB1 modification. The UBA domain occupies 295–335 (EFNEQVLRLMHSLGIDQQKTIESLQNKSYNHFAAIYFLLVE). Residue Thr-484 is modified to Phosphothreonine. Ser-534 and Ser-587 each carry phosphoserine. 2 stretches are compositionally biased toward low complexity: residues 644-659 (SSCP…ESVS) and 742-756 (SSYP…LPRQ). Disordered stretches follow at residues 644 to 666 (SSCP…ASVH), 742 to 776 (SSYP…PLSP), and 801 to 896 (PLPS…SSYD). Residues 765–774 (APPFSLTQPL) are compositionally biased toward polar residues. Pro residues predominate over residues 822-834 (QPPPPPPPPPPRQ).

The protein belongs to the protein kinase superfamily. CAMK Ser/Thr protein kinase family. SNF1 subfamily. As to quaternary structure, interacts with and phosphorylates TORC2/CRTC2. Mg(2+) serves as cofactor. In terms of processing, phosphorylated at Thr-175 by STK11/LKB1 in complex with STE20-related adapter-alpha (STRADA) pseudo kinase and CAB39. Phosphorylated at Thr-484 in response to insulin in adipocytes. Acetylation at Lys-53 inhibits kinase activity. Deacetylated by HDAC6.

The protein resides in the cytoplasm. It is found in the endoplasmic reticulum membrane. It catalyses the reaction L-seryl-[protein] + ATP = O-phospho-L-seryl-[protein] + ADP + H(+). It carries out the reaction L-threonyl-[protein] + ATP = O-phospho-L-threonyl-[protein] + ADP + H(+). With respect to regulation, activated by phosphorylation on Thr-175. Its function is as follows. Serine/threonine-protein kinase that plays a role in many biological processes such as fatty acid oxidation, autophagy, immune response or glucose metabolism. Phosphorylates 'Ser-794' of IRS1 in insulin-stimulated adipocytes, potentially modulating the efficiency of insulin signal transduction. Inhibits CREB activity by phosphorylating and repressing TORCs, the CREB-specific coactivators. Phosphorylates EP300 and thus inhibits its histone acetyltransferase activity. In turn, regulates the DNA-binding ability of several transcription factors such as PPARA or MLXIPL. Also plays a role in thymic T-cell development. The protein is Serine/threonine-protein kinase SIK2 (SIK2) of Homo sapiens (Human).